A 149-amino-acid polypeptide reads, in one-letter code: Transcriptional regulator MraZ (149 aa).

SpoVT-AbrB domains follow at residues 7–54 and 83–126; these read KYVN…GISH and AVQL…QPQN.

This sequence belongs to the MraZ family. In terms of assembly, forms oligomers.

Its subcellular location is the cytoplasm. The protein resides in the nucleoid. The sequence is that of Transcriptional regulator MraZ from Rickettsia peacockii (strain Rustic).